The sequence spans 158 residues: C-type lectin (158 aa).

The first 23 residues, 1–23 (MWQFTVVSLGWLAVFLSLSGAKG), serve as a signal peptide directing secretion. Cystine bridges form between Cys26/Cys37, Cys54/Cys154, and Cys129/Cys146. The C-type lectin domain maps to 33 to 155 (RNGVCNKLFP…CASLHPFICQ (123 aa)). Residues 119 to 121 (EPN) carry the Mannose-binding motif. Glu127, Asn142, and Asp143 together coordinate Ca(2+).

The protein belongs to the true venom lectin family. In terms of tissue distribution, expressed by the venom gland.

Its subcellular location is the secreted. Its function is as follows. Mannose-binding lectin which recognizes specific carbohydrate structures and agglutinates a variety of animal cells by binding to cell-surface glycoproteins and glycolipids. May be a calcium-dependent lectin. In Cerberus rynchops (Dog-faced water snake), this protein is C-type lectin.